A 754-amino-acid chain; its full sequence is Condensin complex subunit 2 (754 aa).

Positions 104–149 (LAQRKTNGASNGDDSNGGNGEGLGGDSDEANIEIDPLTGMPISNDP) are disordered. The segment covering 118-128 (SNGGNGEGLGG) has biased composition (gly residues). Ser245 is modified (phosphoserine). The interval 359–379 (CYPDENHDNTSHDEQDDDNVN) is disordered. Over residues 362-371 (DENHDNTSHD) the composition is skewed to basic and acidic residues. Phosphoserine is present on Ser548. The disordered stretch occupies residues 665–688 (HDSRKNREQSSNDSETHTEDESTK).

This sequence belongs to the CND2 (condensin subunit 2) family. In terms of assembly, component of the condensin complex, which contains the SMC2 and SMC4 heterodimer, and three non SMC subunits that probably regulate the complex: BRN1, YCS4 and YCG1/YCS5.

It localises to the nucleus. The protein resides in the cytoplasm. The protein localises to the chromosome. Regulatory subunit of the condensin complex, a complex required for conversion of interphase chromatin into mitotic-like condense chromosomes. The condensin complex probably introduces positive supercoils into relaxed DNA in the presence of type I topoisomerases and converts nicked DNA into positive knotted forms in the presence of type II topoisomerases. The condensin complex probably also plays a role during interphase. The sequence is that of Condensin complex subunit 2 (BRN1) from Saccharomyces cerevisiae (strain ATCC 204508 / S288c) (Baker's yeast).